We begin with the raw amino-acid sequence, 184 residues long: Alpha-tubulin N-acetyltransferase (184 aa).

Residues Met-1–Phe-174 enclose the N-acetyltransferase domain. Residues Phe-108 to Leu-121 and Ser-144 to Lys-153 each bind acetyl-CoA.

This sequence belongs to the acetyltransferase ATAT1 family.

It catalyses the reaction L-lysyl-[alpha-tubulin] + acetyl-CoA = N(6)-acetyl-L-lysyl-[alpha-tubulin] + CoA + H(+). Its function is as follows. Specifically acetylates 'Lys-40' in alpha-tubulin on the lumenal side of microtubules. Promotes microtubule destabilization and accelerates microtubule dynamics; this activity may be independent of acetylation activity. Acetylates alpha-tubulin with a slow enzymatic rate, due to a catalytic site that is not optimized for acetyl transfer. Enters the microtubule through each end and diffuses quickly throughout the lumen of microtubules. Acetylates only long/old microtubules because of its slow acetylation rate since it does not have time to act on dynamically unstable microtubules before the enzyme is released. This is Alpha-tubulin N-acetyltransferase from Plasmodium vivax (strain Salvador I).